Consider the following 272-residue polypeptide: uncharacterized protein (272 aa).

Transmembrane regions (helical) follow at residues 9 to 29 (GGDIIFLMFTTLAAVSTASEH) and 252 to 272 (SHISFLVPFFSVILVSLISFI).

The protein localises to the membrane. This is an uncharacterized protein from Caenorhabditis elegans.